Consider the following 259-residue polypeptide: 5'-nucleotidase SurE (259 aa).

4 residues coordinate a divalent metal cation: Asp8, Asp9, Ser39, and Asn96.

Belongs to the SurE nucleotidase family. It depends on a divalent metal cation as a cofactor.

It localises to the cytoplasm. It catalyses the reaction a ribonucleoside 5'-phosphate + H2O = a ribonucleoside + phosphate. Its function is as follows. Nucleotidase that shows phosphatase activity on nucleoside 5'-monophosphates. This Pelotomaculum thermopropionicum (strain DSM 13744 / JCM 10971 / SI) protein is 5'-nucleotidase SurE.